The chain runs to 374 residues: MLDVTLIVLCAGNSTRFEHKTKKQWIRVEDEPLWLNVTKRISSFAKFDKIIVTSHQDELNYMKNFSDDFTFVKGGETRQLSILNSLQFVTTKYVMITDVARACVPQSVIENLLNEKSSADCIVPILNVTDTVVYENDTIDRSNVKLIQTPQLSSTQVLRDALNTPIEFTDESSAIKAIDGKIKYIQGSTFSKKLTLGDELDELPCLKAPSNNFFTGTGFDIHAFEEIKDMYLGGVKLPYEYGFKAHSDGDVLIHSVIDALLGACGAGDIGEFFPDTDDKYKGIDSKLLLGQIVNFINNVGYEIVNVDLTIIAQKPKINPFKDEIKKSMAKLLRIEKQFVNVKATTAEKLGFIGRAEGVAVQSIATLKYYNWKKR.

Residues 1–213 (MLDVTLIVLC…PCLKAPSNNF (213 aa)) are 2-C-methyl-D-erythritol 4-phosphate cytidylyltransferase. The tract at residues 214-374 (FTGTGFDIHA…TLKYYNWKKR (161 aa)) is 2-C-methyl-D-erythritol 2,4-cyclodiphosphate synthase. 2 residues coordinate a divalent metal cation: D220 and H222. 4-CDP-2-C-methyl-D-erythritol 2-phosphate is bound by residues 220–222 (DIH) and 246–247 (HS). H254 is a binding site for a divalent metal cation. Residues 268–270 (DIG), 273–277 (FPDTD), 344–347 (TTAE), F351, and R354 each bind 4-CDP-2-C-methyl-D-erythritol 2-phosphate.

This sequence in the N-terminal section; belongs to the IspD/TarI cytidylyltransferase family. IspD subfamily. It in the C-terminal section; belongs to the IspF family. A divalent metal cation is required as a cofactor.

It carries out the reaction 2-C-methyl-D-erythritol 4-phosphate + CTP + H(+) = 4-CDP-2-C-methyl-D-erythritol + diphosphate. It catalyses the reaction 4-CDP-2-C-methyl-D-erythritol 2-phosphate = 2-C-methyl-D-erythritol 2,4-cyclic diphosphate + CMP. It participates in isoprenoid biosynthesis; isopentenyl diphosphate biosynthesis via DXP pathway; isopentenyl diphosphate from 1-deoxy-D-xylulose 5-phosphate: step 2/6. The protein operates within isoprenoid biosynthesis; isopentenyl diphosphate biosynthesis via DXP pathway; isopentenyl diphosphate from 1-deoxy-D-xylulose 5-phosphate: step 4/6. Its function is as follows. Bifunctional enzyme that catalyzes the formation of 4-diphosphocytidyl-2-C-methyl-D-erythritol from CTP and 2-C-methyl-D-erythritol 4-phosphate (MEP) (IspD), and catalyzes the conversion of 4-diphosphocytidyl-2-C-methyl-D-erythritol 2-phosphate (CDP-ME2P) to 2-C-methyl-D-erythritol 2,4-cyclodiphosphate (ME-CPP) with a corresponding release of cytidine 5-monophosphate (CMP) (IspF). This Aliarcobacter butzleri (strain RM4018) (Arcobacter butzleri) protein is Bifunctional enzyme IspD/IspF.